Reading from the N-terminus, the 231-residue chain is 5'-methylthioadenosine/S-adenosylhomocysteine nucleosidase (231 aa).

Catalysis depends on Glu-12, which acts as the Proton acceptor. Residues Gly-78, Ile-153, and 174-175 (ME) each bind substrate. Residue Asp-198 is the Proton donor of the active site.

It belongs to the PNP/UDP phosphorylase family. MtnN subfamily.

The enzyme catalyses S-adenosyl-L-homocysteine + H2O = S-(5-deoxy-D-ribos-5-yl)-L-homocysteine + adenine. It carries out the reaction S-methyl-5'-thioadenosine + H2O = 5-(methylsulfanyl)-D-ribose + adenine. The catalysed reaction is 5'-deoxyadenosine + H2O = 5-deoxy-D-ribose + adenine. It participates in amino-acid biosynthesis; L-methionine biosynthesis via salvage pathway; S-methyl-5-thio-alpha-D-ribose 1-phosphate from S-methyl-5'-thioadenosine (hydrolase route): step 1/2. Its function is as follows. Catalyzes the irreversible cleavage of the glycosidic bond in both 5'-methylthioadenosine (MTA) and S-adenosylhomocysteine (SAH/AdoHcy) to adenine and the corresponding thioribose, 5'-methylthioribose and S-ribosylhomocysteine, respectively. Also cleaves 5'-deoxyadenosine, a toxic by-product of radical S-adenosylmethionine (SAM) enzymes, into 5-deoxyribose and adenine. The polypeptide is 5'-methylthioadenosine/S-adenosylhomocysteine nucleosidase (Maridesulfovibrio salexigens (strain ATCC 14822 / DSM 2638 / NCIMB 8403 / VKM B-1763) (Desulfovibrio salexigens)).